The sequence spans 329 residues: Holliday junction branch migration complex subunit RuvB (329 aa).

Positions 1 to 20 (MSRILEGDPVEGEKSWENEL) are disordered. The segment at 1 to 181 (MSRILEGDPV…FGIVERLQFY (181 aa)) is large ATPase domain (RuvB-L). The span at 11 to 20 (EGEKSWENEL) shows a compositional bias: basic and acidic residues. ATP is bound by residues Leu-20, Arg-21, Gly-62, Lys-65, Thr-66, Thr-67, 128 to 130 (EDY), Arg-171, Tyr-181, and Arg-218. Thr-66 is a binding site for Mg(2+). Positions 182-252 (DKDALRQILM…IAVYALNQLG (71 aa)) are small ATPAse domain (RuvB-S). Residues 255–329 (QYGLDLMDRR…FAKSSVLADK (75 aa)) are head domain (RuvB-H). Residues Arg-291, Lys-310, and Arg-315 each contribute to the DNA site.

This sequence belongs to the RuvB family. In terms of assembly, homohexamer. Forms an RuvA(8)-RuvB(12)-Holliday junction (HJ) complex. HJ DNA is sandwiched between 2 RuvA tetramers; dsDNA enters through RuvA and exits via RuvB. An RuvB hexamer assembles on each DNA strand where it exits the tetramer. Each RuvB hexamer is contacted by two RuvA subunits (via domain III) on 2 adjacent RuvB subunits; this complex drives branch migration. In the full resolvosome a probable DNA-RuvA(4)-RuvB(12)-RuvC(2) complex forms which resolves the HJ.

Its subcellular location is the cytoplasm. It catalyses the reaction ATP + H2O = ADP + phosphate + H(+). Functionally, the RuvA-RuvB-RuvC complex processes Holliday junction (HJ) DNA during genetic recombination and DNA repair, while the RuvA-RuvB complex plays an important role in the rescue of blocked DNA replication forks via replication fork reversal (RFR). RuvA specifically binds to HJ cruciform DNA, conferring on it an open structure. The RuvB hexamer acts as an ATP-dependent pump, pulling dsDNA into and through the RuvAB complex. RuvB forms 2 homohexamers on either side of HJ DNA bound by 1 or 2 RuvA tetramers; 4 subunits per hexamer contact DNA at a time. Coordinated motions by a converter formed by DNA-disengaged RuvB subunits stimulates ATP hydrolysis and nucleotide exchange. Immobilization of the converter enables RuvB to convert the ATP-contained energy into a lever motion, pulling 2 nucleotides of DNA out of the RuvA tetramer per ATP hydrolyzed, thus driving DNA branch migration. The RuvB motors rotate together with the DNA substrate, which together with the progressing nucleotide cycle form the mechanistic basis for DNA recombination by continuous HJ branch migration. Branch migration allows RuvC to scan DNA until it finds its consensus sequence, where it cleaves and resolves cruciform DNA. The polypeptide is Holliday junction branch migration complex subunit RuvB (Bdellovibrio bacteriovorus (strain ATCC 15356 / DSM 50701 / NCIMB 9529 / HD100)).